The following is a 217-amino-acid chain: Large ribosomal subunit protein uL1 (217 aa).

Belongs to the universal ribosomal protein uL1 family. As to quaternary structure, component of the large ribosomal subunit (LSU). Mature ribosomes consist of a small (40S) and a large (60S) subunit. The 40S subunit contains about 32 different proteins and 1 molecule of RNA (18S). The 60S subunit contains 45 different proteins and 3 molecules of RNA (25S, 5.8S and 5S). uL1 forms part of the L1 stalk.

The protein resides in the cytoplasm. Functionally, component of the ribosome, a large ribonucleoprotein complex responsible for the synthesis of proteins in the cell. The small ribosomal subunit (SSU) binds messenger RNAs (mRNAs) and translates the encoded message by selecting cognate aminoacyl-transfer RNA (tRNA) molecules. The large subunit (LSU) contains the ribosomal catalytic site termed the peptidyl transferase center (PTC), which catalyzes the formation of peptide bonds, thereby polymerizing the amino acids delivered by tRNAs into a polypeptide chain. The nascent polypeptides leave the ribosome through a tunnel in the LSU and interact with protein factors that function in enzymatic processing, targeting, and the membrane insertion of nascent chains at the exit of the ribosomal tunnel. uL1 forms part of the L1 stalk, a mobile element that plays a role in evacuating the exit-site tRNA. This is Large ribosomal subunit protein uL1 (RPL10A) from Candida albicans (strain SC5314 / ATCC MYA-2876) (Yeast).